We begin with the raw amino-acid sequence, 104 residues long: Large ribosomal subunit protein bL21 (104 aa).

It belongs to the bacterial ribosomal protein bL21 family. As to quaternary structure, part of the 50S ribosomal subunit. Contacts protein L20.

This protein binds to 23S rRNA in the presence of protein L20. This chain is Large ribosomal subunit protein bL21, found in Rhodopirellula baltica (strain DSM 10527 / NCIMB 13988 / SH1).